The primary structure comprises 219 residues: Probable GTP-binding protein EngB (219 aa).

The region spanning 24–207 (VQPEIAFAGR…HALIESWVRP (184 aa)) is the EngB-type G domain. GTP-binding positions include 32–39 (GRSNAGKS), 59–63 (GRTQH), 81–84 (DLPG), 148–151 (TKCD), and 186–188 (FSA). 2 residues coordinate Mg(2+): Ser-39 and Thr-61.

The protein belongs to the TRAFAC class TrmE-Era-EngA-EngB-Septin-like GTPase superfamily. EngB GTPase family. Mg(2+) serves as cofactor.

In terms of biological role, necessary for normal cell division and for the maintenance of normal septation. The protein is Probable GTP-binding protein EngB of Burkholderia multivorans (strain ATCC 17616 / 249).